Here is a 103-residue protein sequence, read N- to C-terminus: OMEGA-ectatommitoxin(02)-Rm1d (103 aa).

An N-terminal signal peptide occupies residues 1–30 (MKDSYISIVIAYLMVTFILVSSMPIEGEKR). 3 disulfide bridges follow: Cys39–Cys54, Cys49–Cys70, and Cys72–Cys81. The 40-residue stretch at 43 to 82 (LNDENYCFNGKCVHLVAQDEPGKPYYSCICDEFYIGERCG) folds into the EGF-like domain.

The protein belongs to the EGF domain peptide family. In terms of tissue distribution, expressed by the venom gland.

Its subcellular location is the secreted. In terms of biological role, ant peptide with probable defensive activity which acts as a potent agonist of the mammalian epidermal growth factor receptor (EGFR). Mimics, both structurally and functionally, vertebrate epidermal growth factor (EGF) peptide hormones. In vivo, intraplantar injection in mice causes long-lasting (several days) hypersensitivity of the injected paw to both mechanical and thermal stimuli. Its long-lasting effect is unusual for venom toxins whose effects are usually immediate. One possible explanation is that it would reduce the duration of a nest attack, discourage future attacks, or enhance the actions of subsequent exposure to other pain-inducing venom peptides. This is OMEGA-ectatommitoxin(02)-Rm1d from Rhytidoponera metallica (Australian green-headed ant).